A 504-amino-acid polypeptide reads, in one-letter code: Protein Dok-7 (504 aa).

The 106-residue stretch at alanine 4 to glycine 109 folds into the PH domain. Positions arginine 105–phenylalanine 210 constitute an IRS-type PTB domain. Disordered stretches follow at residues phenylalanine 210–alanine 232, leucine 248–tyrosine 348, and serine 371–glycine 483. Positions leucine 263–arginine 280 are enriched in low complexity. 3 stretches are compositionally biased toward polar residues: residues proline 285–glutamate 297, glycine 331–alanine 341, and proline 421–glycine 430.

As to quaternary structure, homodimer. Forms a heterotetramer composed of 2 DOK7 and 2 MUSK molecules which facilitates MUSK trans-autophosphorylation on tyrosine residue and activation. Interacts (via IRS-type PTB domain) with MUSK (via cytoplasmic part); requires MUSK phosphorylation.

Its subcellular location is the cell membrane. It is found in the synapse. In terms of biological role, probable muscle-intrinsic activator of MUSK that plays an essential role in neuromuscular synaptogenesis. Acts in aneural activation of MUSK and subsequent acetylcholine receptor (AchR) clustering in myotubes. Induces autophosphorylation of MUSK. In Mus musculus (Mouse), this protein is Protein Dok-7 (Dok7).